A 239-amino-acid chain; its full sequence is tRNA (guanine-N(1)-)-methyltransferase (239 aa).

Residues Gly108 and 127–132 (LGDFVL) contribute to the S-adenosyl-L-methionine site.

This sequence belongs to the RNA methyltransferase TrmD family. Homodimer.

The protein localises to the cytoplasm. The enzyme catalyses guanosine(37) in tRNA + S-adenosyl-L-methionine = N(1)-methylguanosine(37) in tRNA + S-adenosyl-L-homocysteine + H(+). Its function is as follows. Specifically methylates guanosine-37 in various tRNAs. The protein is tRNA (guanine-N(1)-)-methyltransferase of Streptococcus thermophilus (strain ATCC BAA-250 / LMG 18311).